The primary structure comprises 593 residues: Acetyl-coenzyme A transferase nodX (593 aa).

A disordered region spans residues 572 to 593; sequence DEDEQGSGFRSGSGLGSGSIAD. Residues 580 to 593 show a composition bias toward gly residues; that stretch reads FRSGSGLGSGSIAD.

This sequence belongs to the CoA-transferase III family.

Its pathway is secondary metabolite biosynthesis. Functionally, acetyl-coenzyme A transferase; part of the gene cluster that mediates the biosynthesis of the indole diterpenes nodulisporic acids (NA). Nodulisporic acid A (NAA) and its chemically modified derivatives are of particular significance because of their highly potent insecticidal activity against blood-feeding arthropods and lack of observable adverse effects on mammals, in particular the tremogenicity associated with the paspaline-derived IDTs is not observed. The geranylgeranyl diphosphate (GGPP) synthase ggs1, localized outside of the cluster, is proposed to catalyze the first step in nodulisporic acid biosynthesis via conversion of farnesyl pyrophosphate and isopentyl pyrophosphate into geranylgeranyl pyrophosphate (GGPP). Condensation of indole-3-glycerol phosphate with GGPP by the prenyl transferase nodC then forms 3-geranylgeranylindole (3-GGI). Epoxidation by the FAD-dependent monooxygenase nodM leads to a single-epoxidized-GGI that is substrate of the terpene cyclase nodB for cyclization to yield emindole SB. The terminal methyl carbon, C28, of emindole SB is then oxidized by the cytochrome P450 monooxygenase nodW to produce nodulisporic acid F (NAF), the pentacyclic core of NAA. NAF is converted to nodulisporic acid E (NAE) via prenylation. This step is probably performed by one of the indole diterpene prenyltransferases nodD1 or nodD2. Several oxidation steps performed by the FAD-linked oxidoreductase nodO and one of the cytochrome P450 monooxygenase nodR, nodX or nodZ further convert NAE to nodulisporic acid D (NAD). NAD is substrate of cytochrome P450 monooxygenase nodJ to produce the precursor of nodulisporic acid C (NAC), converted to NAC by one of the indole diterpene prenyltransferases nodD1 or nodD2. The FAD-dependent monooxygenase nodY2 then oxidizes NAC to nodulisporic acid B (NAB). Finally NAB is converted to NAA by one of the cytochrome P450 monooxygenases nodR, nodX or nodZ. The polypeptide is Acetyl-coenzyme A transferase nodX (Hypoxylon pulicicidum).